Reading from the N-terminus, the 102-residue chain is Circadian clock oscillator protein KaiB (102 aa).

It belongs to the KaiB family. Undergoes a major conformational rearrangment; in the free state forms homotetramers with 2 dimers. When bound to the CI domain of KaiC switches to a monomeric thioredoxin-fold (KaiB(fs)). Monomers, homodimers and homotetramers are detected in solution; at low concentrations only monomers are seen. In vitro forms KaiC(6):KaiB(1) and KaiC(6):KaiB(6) complexes. Only associates with 'Ser-431'-phosphorylated KaiC (and not with doubly phosphorylated KaiC). Complex formation between KaiB and KaiC is regulated by the phosphorylation state of KaiC and by an ATP hydrolysis-driven conformation change in the CI ring of KaiC; complex formation is slow. Slow complex formation is crucial for the timing of the circadian period. In low resolution cryo-EM forms a KaiC(6):KaiB(6) complex. The KaiABC complex composition changes during the circadian cycle to control KaiC phosphorylation. Complexes KaiC(6), KaiA(2-4):KaiC(6), KaiB(6):KaiC(6) and KaiC(6):KaiB(6):KaiA(12) are among the most important forms, many form cooperatively. The KaiB:KaiC complex is more prevalent at 16 hours (in the dark) than at 4 hours (in the light) in the circadian cycle. The KaiA:KaiB complex is only found at 20-24 hours in the circadian cycle (subjective night). Binds to the CI domain of KaiC; SasA and KaiB compete to bind to the CI domain.

The protein localises to the cytoplasm. Its subcellular location is the cell membrane. Its function is as follows. Key component of the KaiABC oscillator complex, which constitutes the main circadian regulator in cyanobacteria. Complex composition changes during the circadian cycle to control KaiC phosphorylation. KaiA stimulates KaiC autophosphorylation, while KaiB sequesters KaiA, leading to KaiC autodephosphorylation. KaiA binding to the KaiC CII domain yields KaiA(2-4):KaiC(6) complexes which stimulate KaiC autophosphorylation. Phospho-Ser-431 KaiC accumulation triggers binding of KaiB to form the KaiB(6):KaiC(6) complex, leading to changes in the output regulators CikA and SasA. KaiB switches to a thioredoxin-like fold (KaiB(fs)) in complex with KaiC. KaiB(6):KaiC(6) formation exposes a site for KaiA binding that sequesters KaiA from the CII domain, making the KaiC(6):KaiB(6):KaiA(12) complex that results in KaiC autodephosphorylation. Complete dephosphorylation of KaiC leads to dissociation of KaiA(2):KaiB(1), completing 1 cycle of the Kai oscillator. Circadian oscillations can be generated in vitro by incubating KaiA, KaiB and KaiC with 1 mM ATP. The cycle is self-sustainable for at least 3 cycles and resistant to temperature changes. A very robust clock is reconstituted with KaiA, KaiB, KaiC, SasA, CikA and RpaA; output is measured by transcription from an appropriate reporter. In terms of biological role, a metamorphic protein which reversibly switches between an inactive tetrameric fold and a rare, thioredoxin-like monomeric fold (KaiB(fs)). KaiB(fs) binds phospho-KaiC, KaiA and CikA. KaiA and CikA compete for binding to KaiB(fs), and KaiB(fs) and SasA compete for binding to KaiC, thus the clock oscillator and output signal pathway are tightly coupled. This is Circadian clock oscillator protein KaiB from Synechococcus elongatus (strain ATCC 33912 / PCC 7942 / FACHB-805) (Anacystis nidulans R2).